The chain runs to 409 residues: DEP domain-containing mTOR-interacting protein (409 aa).

M1 bears the N-acetylmethionine mark. Gly residues predominate over residues 1-10; that stretch reads MEEGSSGGSG. Residues 1–23 are disordered; that stretch reads MEEGSSGGSGSSDSNAGGSGGVQ. DEP domains lie at 36–119 and 146–219; these read TGEQ…RFRK and PETT…QFRM. Positions 217-235 match the DDEX motif motif; the sequence is FRMNFRRRRRLMELLNETS. S235 carries the post-translational modification Phosphoserine. The residue at position 241 (T241) is a Phosphothreonine. A phosphoserine mark is found at S244 and S258. T259 carries the post-translational modification Phosphothreonine. A phosphoserine mark is found at S263, S265, S280, S282, S283, S286, and S287. A BetaTrCP degron motif motif is present at residues 286–291; it reads SSGYFS. Y289 is subject to Phosphotyrosine. Phosphoserine is present on residues S291 and S293. Position 295 is a phosphothreonine (T295). Residues S297, S298, and S299 each carry the phosphoserine modification. In terms of domain architecture, PDZ spans 330–407; the sequence is TFTIVGDAVG…TIVMEVMEEL (78 aa).

As to quaternary structure, associated component of the mechanistic target of rapamycin complex 1 (mTORC1) which contains MTOR, MLST8 and RPTOR. Associated component of the mechanistic target of rapamycin complex 2 (mTORC2) which contains MTOR, MLST8, PROTOR1, RICTOR, MAPKAP1 and DEPTOR. Interacts (via PDZ domain) with MTOR; interacts with MTOR within both mTORC1 and mTORC2. Interacts (via PDZ domain) with MINAR1 (via N-terminus). Interacts with SIK3. In terms of processing, phosphorylation weakens interaction with MTOR within mTORC1 and mTORC2. Phosphorylated at Ser-286, Ser-287 and Ser-291 in response to mitogenic stimulation by MTOR: DEPTOR is either directly phosphorylated by MTOR or indirectly via proteins kinases that are activated by MTOR, such as CK1/CSNK1A1. Phosphorylation at Ser-286, Ser-287 and Ser-291 promotes ubiquitination by the SCF(BTRC) complex, followed by degradation. Phosphorylation at Ser-235 by MAPK3/ERK1 promotes deubiquitination by USP7, enhancing its stability. Phosphorylation at Tyr-291 by SYK impairs its interaction with MTOR, promoting mTORC1 and mTORC2 signaling. Post-translationally, ubiquitinated; leading to proteasomal degradation. Ubiquitination by the SCF(BTRC) and SCF(FBXW11) complexes following phosphorylation at Ser-286, Ser-287 and Ser-291 by MTOR, leads to its degradation by the proteasome. Deubiquitinated by OTUB1 in response to amino acid via a non-canonical mechanism, leading to DEPTOR stability. Deubiquitinated by USP7 following phosphorylation at Ser-235, promoting its stability.

The protein localises to the lysosome membrane. With respect to regulation, inhibited upon phosphatidic acid-binding: phosphatidic acid produced upon mitogenic stimulation promotes DEPTOR dissociatiom from the mTORC1 and mTORC2 complexes, leading to their activation. Specifically binds unsaturated phosphatidic acid, such as 16:0-18:1, 18:0-18:1 and di-18:1. Inhibited when nutrients are present via a feedback loop: phosphorylation by MTOR promotes DEPTOR ubiquitination and degradation. Functionally, negative regulator of the mTORC1 and mTORC2 complexes: inhibits the protein kinase activity of MTOR, thereby inactivating both complexes. DEPTOR inhibits mTORC1 and mTORC2 to induce autophagy. In contrast to AKT1S1/PRAS40, only partially inhibits mTORC1 activity. This is DEP domain-containing mTOR-interacting protein from Mus musculus (Mouse).